The following is a 276-amino-acid chain: Large ribosomal subunit protein uL2 (276 aa).

A disordered region spans residues 224 to 254 (VMNPVDHPHGGGEGRTSGGRHPVTPWGVPTK).

This sequence belongs to the universal ribosomal protein uL2 family. As to quaternary structure, part of the 50S ribosomal subunit. Forms a bridge to the 30S subunit in the 70S ribosome.

One of the primary rRNA binding proteins. Required for association of the 30S and 50S subunits to form the 70S ribosome, for tRNA binding and peptide bond formation. It has been suggested to have peptidyltransferase activity; this is somewhat controversial. Makes several contacts with the 16S rRNA in the 70S ribosome. The protein is Large ribosomal subunit protein uL2 of Gluconobacter oxydans (strain 621H) (Gluconobacter suboxydans).